Consider the following 363-residue polypeptide: 24-methylenesterol C-methyltransferase 2 (363 aa).

Residues 6 to 26 (MAWTAAGVGMALVYWFVWVMG) traverse the membrane as a helical segment.

This sequence belongs to the class I-like SAM-binding methyltransferase superfamily. Erg6/SMT family.

The protein localises to the membrane. The catalysed reaction is 24-methylidenelophenol + S-adenosyl-L-methionine = (Z)-24-ethylidenelophenol + S-adenosyl-L-homocysteine + H(+). Its pathway is steroid biosynthesis; sterol biosynthesis. Its function is as follows. Catalyzes the methyl transfer from S-adenosyl-methionine to the methylene group of 24-methylene lophenol to form 24-ethylidene lophenol. The sequence is that of 24-methylenesterol C-methyltransferase 2 (Smt2-1) from Oryza sativa subsp. japonica (Rice).